We begin with the raw amino-acid sequence, 815 residues long: Serotype-specific mannosyltransferase WbdA (815 aa).

An alpha-(1-&gt;2)-mannosyltransferase region spans residues 1 to 374 (MSRAIIENAG…WANTAHLAID (374 aa)). Residues 431 to 804 (KLLVDISVLA…WKQSAELLLK (374 aa)) are alpha-(1-&gt;3)-mannosyltransferase.

The protein belongs to the glycosyltransferase group 1 family. Glycosyltransferase 4 subfamily.

The protein localises to the cell inner membrane. Its pathway is bacterial outer membrane biogenesis; LPS O-antigen biosynthesis. In terms of biological role, mannosyltransferase involved in the biosynthesis of the repeat unit of the lipopolysaccharide (LPS) O-antigen region. The chain is Serotype-specific mannosyltransferase WbdA from Escherichia coli.